A 530-amino-acid chain; its full sequence is Membrane-bound lytic murein transglycosylase F (530 aa).

An N-terminal signal peptide occupies residues methionine 1–isoleucine 27. Residues aspartate 28 to isoleucine 279 form a non-LT domain region. The LT domain stretch occupies residues glycine 280–asparagine 530. Residue glutamate 324 is part of the active site. A disordered region spans residues alanine 505–asparagine 530. Over residues asparagine 513–asparagine 530 the composition is skewed to low complexity.

It in the N-terminal section; belongs to the bacterial solute-binding protein 3 family. This sequence in the C-terminal section; belongs to the transglycosylase Slt family.

The protein resides in the cell outer membrane. The catalysed reaction is Exolytic cleavage of the (1-&gt;4)-beta-glycosidic linkage between N-acetylmuramic acid (MurNAc) and N-acetylglucosamine (GlcNAc) residues in peptidoglycan, from either the reducing or the non-reducing ends of the peptidoglycan chains, with concomitant formation of a 1,6-anhydrobond in the MurNAc residue.. In terms of biological role, murein-degrading enzyme that degrades murein glycan strands and insoluble, high-molecular weight murein sacculi, with the concomitant formation of a 1,6-anhydromuramoyl product. Lytic transglycosylases (LTs) play an integral role in the metabolism of the peptidoglycan (PG) sacculus. Their lytic action creates space within the PG sacculus to allow for its expansion as well as for the insertion of various structures such as secretion systems and flagella. This is Membrane-bound lytic murein transglycosylase F from Vibrio cholerae serotype O1 (strain ATCC 39541 / Classical Ogawa 395 / O395).